Reading from the N-terminus, the 1053-residue chain is MGPTENQSFEIEFPNSSNTAAANSISTAINNNTTTAATITFTPANNNINNINNNNNNNNNNKFNSNFDIESNKENSINQSNINSNVNSFPLKIQTKTLNSTTTSSNNNNNNIFSIGFRPLSPRGVSPRFHSNSSSSCSSEISTPSSSTFLEDPNLIASNTISSNNSINNNNNNNNNNNNNNNNNNNDNSNNNINTNNINNNNNNTNNGENPQKKQRNSQILSKNFYSLSLHADSPKHSRSTTDLSTFLGMSDPDVMTYRSKTFCISDFHQFDIDTTTNDNKNKNNNTKSTDESSTFDGKSSNSVENNNMTIINNNNNNNNNNNNNNNNNNNNNNLNQDRPTIPTVAHSLSSNSIPHKFNSSNSLPPQMLSSSAPSLFSLLENSNNNNNNNNNNNNNNNNNNNNNNNNDNSNISINDESIVLISTPVKEYSYNRSLCLSDEEGGEDDEDDTPPTPIQLVRPTPTPINPSLSLSLSSSLNATNSTTYLHLGRSATVLLNPPLLVSSMRQHHNSPSSSPSQSIPIVQTRERSQSSLSFLSPYQQQYYPSSPELSPMVPTPLVNRIFNNINNNNNNNNNNNNNNNNNNNNNNNNNNNNNNNGTNSNNLNNQSTSEDRDDSPNTSLDQISGSPYKTPSKLSFHSPNSSAIFNSISNSQQTGKRSRTCLDFTKFSSHLLDEDSSCFSTQTNNNNTSSTGLISPSSSPKQQNVLIENTTNTTSNSSSSSSSTTTTTTTISVTNTLAAIQQNLNSNANLNNNNNNNNNNNNNISSYFSRSNSISSQRPPRPLSMSSSFISRQSPDIHISSNSLPKPVDTSNTNNNNENENDTNKLDKINNVNSNIAKIIEQQQQRNISNSNNNNNLTQDQDQQDDQFKAKLLKQLSGRQGYNGVSSESVYELLKNPTLINAIITVVDCRYKYEYDGGHIKNAINIPPTGSRQMVLDRFFKFPTPKNQQHVIIFHCEFSSKRAPDCYSLFRELDREHNEYPNIHYPEIYLLNGGYKKFFESFQGDMCEGNYIRMDDKLYQANLKEEEEKKKKEKITIRNIKAFKNRSHSFHV.

Disordered regions lie at residues 125–217, 231–253, 273–412, 438–466, 504–532, 562–638, 684–703, and 747–829; these read VSPR…KQRN, HADS…MSDP, IDTT…NSNI, SDEE…TPIN, SMRQ…SQSS, IFNN…LSFH, TNNN…SPKQ, and SNAN…KLDK. Low complexity-rich tracts occupy residues 131–147 and 158–207; these read SNSS…PSSS and SNTI…NTNN. Low complexity predominate over residues 274–295; sequence DTTTNDNKNKNNNTKSTDESST. The segment covering 296-305 has biased composition (polar residues); it reads FDGKSSNSVE. The span at 306-336 shows a compositional bias: low complexity; the sequence is NNNMTIINNNNNNNNNNNNNNNNNNNNNNLN. Polar residues predominate over residues 347-365; the sequence is HSLSSNSIPHKFNSSNSLP. Residues 369-412 are compositionally biased toward low complexity; it reads LSSSAPSLFSLLENSNNNNNNNNNNNNNNNNNNNNNNNNDNSNI. Residues 438–450 show a composition bias toward acidic residues; it reads SDEEGGEDDEDDT. 2 stretches are compositionally biased toward low complexity: residues 511–522 and 564–606; these read SPSSSPSQSIPI and NNIN…NLNN. Residues 617–638 show a composition bias toward polar residues; that stretch reads PNTSLDQISGSPYKTPSKLSFH. 2 stretches are compositionally biased toward low complexity: residues 684 to 701 and 747 to 777; these read TNNN…SSSP and SNAN…SISS. A compositionally biased stretch (polar residues) spans 785 to 805; it reads SMSSSFISRQSPDIHISSNSL. In terms of domain architecture, Rhodanese spans 901 to 1001; that stretch reads INAIITVVDC…LNGGYKKFFE (101 aa). Cysteine 957 acts as the Cysteine persulfide intermediate in catalysis.

Belongs to the MPI phosphatase family. In terms of processing, phosphorylated.

The enzyme catalyses O-phospho-L-tyrosyl-[protein] + H2O = L-tyrosyl-[protein] + phosphate. Its function is as follows. Tyrosine protein phosphatase which may function as a dosage-dependent inducer in mitotic control. The polypeptide is M-phase inducer phosphatase (cdc25) (Dictyostelium discoideum (Social amoeba)).